The following is a 341-amino-acid chain: Phosphoribosylformylglycinamidine cyclo-ligase (341 aa).

The protein belongs to the AIR synthase family.

The protein localises to the cytoplasm. It catalyses the reaction 2-formamido-N(1)-(5-O-phospho-beta-D-ribosyl)acetamidine + ATP = 5-amino-1-(5-phospho-beta-D-ribosyl)imidazole + ADP + phosphate + H(+). It participates in purine metabolism; IMP biosynthesis via de novo pathway; 5-amino-1-(5-phospho-D-ribosyl)imidazole from N(2)-formyl-N(1)-(5-phospho-D-ribosyl)glycinamide: step 2/2. The chain is Phosphoribosylformylglycinamidine cyclo-ligase from Xanthomonas axonopodis pv. citri (strain 306).